The primary structure comprises 805 residues: Transmembrane channel-like protein 6 (805 aa).

The segment at 1–29 is disordered; that stretch reads MAQPLAFILDVPETPGDQGQGPSPYDESE. The Lumenal segment spans residues 1–209; sequence MAQPLAFILD…SCCGRLRYAC (209 aa). Residue threonine 89 is modified to Phosphothreonine. An Omega-N-methylarginine modification is found at arginine 94. N-linked (GlcNAc...) asparagine glycosylation occurs at asparagine 103. Residue threonine 105 is modified to Phosphothreonine. A helical membrane pass occupies residues 210–230; the sequence is VLALHSLGLALLSALQALMPW. Residues 231 to 249 are Cytoplasmic-facing; sequence RYALKRIGGQFGSSVLSYF. A helical transmembrane segment spans residues 250 to 270; sequence LFLKTLLAFNALLLLLLVAFI. Over 271–338 the chain is Lumenal; sequence MGPQVAFPPA…TPRVGGLPYN (68 aa). An N-linked (GlcNAc...) asparagine glycan is attached at asparagine 312. Residues 339–359 traverse the membrane as a helical segment; it reads MPLAYLSTVGVSFFITCITLV. Topologically, residues 360-431 are cytoplasmic; the sequence is YSMAHSFGES…RSVCGRLRQA (72 aa). The chain crosses the membrane as a helical span at residues 432 to 452; sequence AVLGLVWLLCLGTALGCAVAV. The Lumenal portion of the chain corresponds to 453-469; it reads HVFSEFMIQSPEAAGQE. A helical transmembrane segment spans residues 470–490; it reads AVLLVLPLVVGLLNLGAPYLC. Over 491 to 505 the chain is Cytoplasmic; that stretch reads RVLAALEPHDSPVLE. A helical membrane pass occupies residues 506–526; that stretch reads VYVAICRNLILKLAILGTLCY. Over 527–553 the chain is Lumenal; the sequence is HWLGRRVGVLQGQCWEDFVGQELYRFL. Residues 554 to 574 traverse the membrane as a helical segment; sequence VMDFVLMLLDTLFGELVWRII. Over 575 to 604 the chain is Cytoplasmic; the sequence is SEKKLKRRRKPEFDIARNVLELIYGQTLTW. Residues 605–625 form a helical membrane-spanning segment; sequence LGVLFSPLLPAVQIIKLLLVF. At 626-650 the chain is on the lumenal side; sequence YVKKTSLLANCQAPRRPWLASHMST. Residues 651–671 traverse the membrane as a helical segment; the sequence is VFLTLLCFPAFLGAAVFLCYA. Over 672 to 722 the chain is Cytoplasmic; the sequence is VWQVKPSSTCGPFRTLDTMYEAGRVWVRHLEAAGPRVSWLPWVHRYLMENT. Residues 723-743 traverse the membrane as a helical segment; that stretch reads FFVFLVSALLLAVIYLNIQVV. Over 744–805 the chain is Lumenal; it reads RGQRKVICLL…PALLTDEQDA (62 aa). The segment at 778–805 is disordered; it reads KEREERSRVGTTEEAAAPPALLTDEQDA.

It belongs to the TMC family. In terms of assembly, interacts with TMC8. Interacts and forms a complex with TMC8 and CIB1; the interaction stabilizes each component of the complex. Interacts and forms a complex with TMC8 and SLC30A1/ZNT1; the interaction regulates zinc transport into the ER. As to quaternary structure, (Microbial infection) Interacts with human papillomavirus 16/HPV16 protein E5; the interaction alleviates TMC6-mediated transcription factors inhibition. As to expression, expressed in placenta, prostate, testis, activated T-lymphocytes and lymphokine-activated killer (LAK) lymphocytes.

It is found in the endoplasmic reticulum membrane. It localises to the golgi apparatus membrane. Its subcellular location is the nucleus membrane. In terms of biological role, acts as a regulatory protein involved in the regulation of numerous cellular processes. Together with its homolog TMC8/EVER2, forms a complex with CIB1 in lymphocytes and keratynocytes where TMC6 and TMC8 stabilize CIB1 and reciprocally. Together with TMC8, also forms a complex with and activates zinc transporter ZNT1 at the ER membrane of keratynocytes, thereby facilitating zinc uptake into the ER. Down-regulates the activity of transcription factors induced by zinc and cytokines. Also plays a role in thermal sensation by inhibiting the M-channel (KCNQ2-KCNQ3 channel) current in primary sensory neurons. This chain is Transmembrane channel-like protein 6, found in Homo sapiens (Human).